The following is a 131-amino-acid chain: Small ribosomal subunit protein uS8 (131 aa).

Belongs to the universal ribosomal protein uS8 family. In terms of assembly, part of the 30S ribosomal subunit. Contacts proteins S5 and S12.

One of the primary rRNA binding proteins, it binds directly to 16S rRNA central domain where it helps coordinate assembly of the platform of the 30S subunit. This Wolbachia pipientis wMel protein is Small ribosomal subunit protein uS8.